The chain runs to 183 residues: Small ribosomal subunit protein uS4c (183 aa).

An S4 RNA-binding domain is found at 82–143; the sequence is MRLDNILFRL…KQRSKALIQN (62 aa).

Belongs to the universal ribosomal protein uS4 family. In terms of assembly, part of the 30S ribosomal subunit. Contacts protein S5. The interaction surface between S4 and S5 is involved in control of translational fidelity.

The protein resides in the plastid. Its subcellular location is the chloroplast. Its function is as follows. One of the primary rRNA binding proteins, it binds directly to 16S rRNA where it nucleates assembly of the body of the 30S subunit. Functionally, with S5 and S12 plays an important role in translational accuracy. The chain is Small ribosomal subunit protein uS4c (rps4) from Schizorhiza neglecta (Lapeirousia neglecta).